Reading from the N-terminus, the 676-residue chain is Envelope glycoprotein (676 aa).

An N-terminal signal peptide occupies residues 1–32; it reads MGGLSLLQLPRDKFRKSSFFVWVIILFQKAFS. Residues 33–185 form a receptor binding region; it reads MPLGVVTNST…FAEGVIAFLI (153 aa). Over 33 to 650 the chain is Extracellular; that stretch reads MPLGVVTNST…DDNWWTGWRQ (618 aa). N40 is a glycosylation site (N-linked (GlcNAc...) asparagine; by host). Intrachain disulfides connect C53/C609, C108/C135, C121/C147, C511/C556, and C601/C608. Residues N204, N208, N238, N257, N268, N296, N314, and N366 are each glycosylated (N-linked (GlcNAc...) asparagine; by host). The interval 305 to 485 is mucin-like region; the sequence is ELSFEALSLN…STSNGLITST (181 aa). Disordered regions lie at residues 337–373 and 404–461; these read RKYS…GRRV and RPSS…LTTP. Low complexity-rich tracts occupy residues 405 to 428 and 449 to 461; these read PSSS…TPTT and PGPT…LTTP. N463 is a glycosylation site (N-linked (GlcNAc...) asparagine; by host). A fusion peptide region spans residues 524–539; that stretch reads HNAAGIAWIPYFGPGA. Residues 554-595 adopt a coiled-coil conformation; that stretch reads LVCGLRQLANETTQALQLFLRATTELRTYTILNRKAIDFLLR. N563 carries N-linked (GlcNAc...) asparagine; by host glycosylation. A coiled-coil region spans residues 615-634; sequence WTKNITDKINQIIHDFIDNP. A glycan (N-linked (GlcNAc...) asparagine; by host) is linked at N618. A helical transmembrane segment spans residues 651-671; the sequence is WIPAGIGITGIIIAIIALLCV. 2 S-palmitoyl cysteine; by host lipidation sites follow: C670 and C672. Topologically, residues 672-676 are cytoplasmic; it reads CKLLC.

This sequence belongs to the filoviruses glycoprotein family. In terms of assembly, homotrimer; each monomer consists of a GP1 and a GP2 subunit linked by disulfide bonds. The resulting peplomers (GP1,2) protrude from the virus surface as spikes. Interacts with host integrin alpha-V/ITGAV. Interacts with host CLEC10A. Binds also to host CD209 and CLEC4M/DC-SIGN(R). Interacts with host FOLR1. Interacts with BST2; this interaction inhibits the antiviral effect of BST2 and this allows viral release from infected cells. Interacts with host FCN1; this interaction enhances viral entry. Interacts with host TLR4; this interaction induces cell death in T-lymphocytes or proinflammatory cytokines and SOCS1 production in monocytes. As to quaternary structure, interacts with host entry receptor NPC1. GP1 and GP2delta are part of GP1,2delta soluble complexes released by ectodomain shedding. In terms of processing, N-glycosylated. Post-translationally, O-glycosylated in the mucin-like region. Palmitoylation of GP2 is not required for its function. In terms of processing, specific enzymatic cleavages in vivo yield mature proteins. The precursor is processed into GP1 and GP2 by host cell furin in the trans Golgi, and maybe by other host proteases, to yield the mature GP1 and GP2 proteins. The cleavage site corresponds to the furin optimal cleavage sequence [KR]-X-[KR]-R. This cleavage does not seem to be required for function. After the internalization of the virus into cell endosomes, GP1 C-terminus is removed by the endosomal proteases cathepsin B, cathepsin L, or both, leaving a 19-kDa N-terminal fragment which is further digested by cathepsin B. Proteolytic processing of GP1,2 by host ADAM17 can remove the transmembrane anchor of GP2 and leads to shedding of complexes consisting in GP1 and truncated GP2 (GP1,2delta).

Its subcellular location is the virion membrane. It localises to the host cell membrane. The protein localises to the secreted. In terms of biological role, trimeric GP1,2 complexes form the virion surface spikes and mediate the viral entry processes, with GP1 acting as the receptor-binding subunit and GP2 as the membrane fusion subunit. At later times of infection, down-regulates the expression of various host cell surface molecules that are essential for immune surveillance and cell adhesion. Down-modulates several integrins including ITGA1, ITGA2, ITGA3, ITGA4, ITGA5, ITGA6, ITGAV and ITGB1. This decrease in cell adhesion molecules may lead to cell detachment, contributing to the disruption of blood vessel integrity and hemorrhages developed during infection (cytotoxicity). Interacts with host TLR4 and thereby stimulates the differentiation and activation of monocytes leading to bystander death of T-lymphocytes. Down-regulates as well the function of host natural killer cells. Counteracts the antiviral effect of host BST2/tetherin that restricts release of progeny virions from infected cells. However, cooperates with VP40 and host BST2 to activate canonical NF-kappa-B pathway in a manner dependent on neddylation. Its function is as follows. Functions as a decoy for anti-GP1,2 antibodies thereby contributing to viral immune evasion. Interacts and activates host macrophages and dendritic cells inducing up-regulation of cytokine transcription. This effect is mediated throught activation of host TLR4. Functionally, responsible for binding to the receptor(s) on target cells. Interacts with CD209/DC-SIGN and CLEC4M/DC-SIGNR which act as cofactors for virus entry into dendritic cells (DCs) and endothelial cells. Binding to the macrophage specific lectin CLEC10A also seems to enhance virus infectivity. Interaction with FOLR1/folate receptor alpha may be a cofactor for virus entry in some cell types, although results are contradictory. Members of the Tyro3 receptor tyrosine kinase family also seem to be cell entry factors in filovirus infection. Once attached, the virions are internalized through clathrin-dependent endocytosis and/or macropinocytosis. After internalization of the virus into the endosomes of the host cell, proteolysis of GP1 by two cysteine proteases, CTSB/cathepsin B and CTSL/cathepsin L removes the glycan cap and allows GP1 binding to the host entry receptor NPC1. NPC1-binding, Ca(2+) and acidic pH induce a conformational change of GP2, which unmasks its fusion peptide and permit membranes fusion. Acts as a class I viral fusion protein. Under the current model, the protein has at least 3 conformational states: pre-fusion native state, pre-hairpin intermediate state, and post-fusion hairpin state. During viral and target cell membrane fusion, the coiled coil regions (heptad repeats) assume a trimer-of-hairpins structure, positioning the fusion peptide in close proximity to the C-terminal region of the ectodomain. The formation of this structure appears to drive apposition and subsequent fusion of viral and target cell membranes. Responsible for penetration of the virus into the cell cytoplasm by mediating the fusion of the membrane of the endocytosed virus particle with the endosomal membrane. Low pH in endosomes induces an irreversible conformational change in GP2, releasing the fusion hydrophobic peptide. This Sudan ebolavirus (strain Human/Uganda/Gulu/2000) (SEBOV) protein is Envelope glycoprotein (GP).